The sequence spans 44 residues: Viresin (44 aa).

Belongs to the insect A10/OS-D protein family.

The protein localises to the secreted. Functionally, has antibacterial activity against the Gram-negative bacteria E.coli and E.cloacae, but not against the Gram-negative bacteria P.aeruginosa, P.vulgaris, K.pneumoniae and S.enteritidis or the Gram-positive bacteria S.aureus, S.epidermidis and S.salivarius. The sequence is that of Viresin from Heliothis virescens (Tobacco budworm moth).